A 395-amino-acid chain; its full sequence is Carbamoyl phosphate synthase small chain (395 aa).

The interval 1–192 is CPSase; it reads MTYNLHPAIL…LQYKTDKMYG (192 aa). 3 residues coordinate L-glutamine: Ser-50, Gly-244, and Gly-246. Positions 196–383 constitute a Glutamine amidotransferase type-1 domain; that stretch reads KIILIDFGVK…INLIKHFKQY (188 aa). Cys-273 serves as the catalytic Nucleophile. L-glutamine is bound by residues Met-274, Gln-277, Asn-313, Gly-315, and Phe-316. Residues His-356 and Glu-358 contribute to the active site.

It belongs to the CarA family. Composed of two chains; the small (or glutamine) chain promotes the hydrolysis of glutamine to ammonia, which is used by the large (or ammonia) chain to synthesize carbamoyl phosphate. Tetramer of heterodimers (alpha,beta)4.

Its subcellular location is the plastid. It localises to the chloroplast. The enzyme catalyses hydrogencarbonate + L-glutamine + 2 ATP + H2O = carbamoyl phosphate + L-glutamate + 2 ADP + phosphate + 2 H(+). It catalyses the reaction L-glutamine + H2O = L-glutamate + NH4(+). It functions in the pathway amino-acid biosynthesis; L-arginine biosynthesis; carbamoyl phosphate from bicarbonate: step 1/1. Its pathway is pyrimidine metabolism; UMP biosynthesis via de novo pathway; (S)-dihydroorotate from bicarbonate: step 1/3. Its function is as follows. Small subunit of the glutamine-dependent carbamoyl phosphate synthetase (CPSase). CPSase catalyzes the formation of carbamoyl phosphate from the ammonia moiety of glutamine, carbonate, and phosphate donated by ATP, constituting the first step of 2 biosynthetic pathways, one leading to arginine and/or urea and the other to pyrimidine nucleotides. The small subunit (glutamine amidotransferase) binds and cleaves glutamine to supply the large subunit with the substrate ammonia. In Gracilaria tenuistipitata var. liui (Red alga), this protein is Carbamoyl phosphate synthase small chain.